Here is a 90-residue protein sequence, read N- to C-terminus: Small regulatory polypeptide of amino acid response (90 aa).

Residues 1-18 lie on the Lumenal side of the membrane; that stretch reads MGAKAPRGPKVAQWAMET. Residues 19–39 traverse the membrane as a helical segment; sequence AVIGVVVVLFVVTVAITCVLC. Topologically, residues 40 to 90 are cytoplasmic; that stretch reads CFSCDSRAQDPQGGPGRSFTVATFRQEASLFTGPVRHAQPVPSAQDFWTFM.

Interacts with components of the lysosomal V-ATPase complex. Interacts with ATP6V0A1. Interacts with ATP6V0A2. Highly expressed in lung, heart and skeletal muscle.

It localises to the late endosome membrane. The protein resides in the lysosome membrane. In terms of biological role, negative regulator of amino acid sensing and mTORC1, a signaling complex promoting cell growth in response to growth factors, energy levels and amino acids. Negatively regulates mTORC1 activation by inhibiting recruitment of mTORC1 to lysosomes upon stimulation with amino acids: acts by promoting the formation of a tightly bound supercomplex composed of the lysosomal V-ATPase, Ragulator and Rag GTPases, preventing recruitment of mTORC1. Acts as a regulator of muscle regeneration following injury by regulating mTORC1 activation. The polypeptide is Small regulatory polypeptide of amino acid response (Homo sapiens (Human)).